Here is a 187-residue protein sequence, read N- to C-terminus: Probable chorismate pyruvate-lyase (187 aa).

Positions 76, 114, and 173 each coordinate substrate.

Belongs to the UbiC family.

It is found in the cytoplasm. The enzyme catalyses chorismate = 4-hydroxybenzoate + pyruvate. Its pathway is cofactor biosynthesis; ubiquinone biosynthesis. In terms of biological role, removes the pyruvyl group from chorismate, with concomitant aromatization of the ring, to provide 4-hydroxybenzoate (4HB) for the ubiquinone pathway. In Shewanella amazonensis (strain ATCC BAA-1098 / SB2B), this protein is Probable chorismate pyruvate-lyase.